A 245-amino-acid chain; its full sequence is 1-(5-phosphoribosyl)-5-[(5-phosphoribosylamino)methylideneamino] imidazole-4-carboxamide isomerase (245 aa).

Aspartate 8 acts as the Proton acceptor in catalysis. Aspartate 129 (proton donor) is an active-site residue.

It belongs to the HisA/HisF family.

The protein localises to the cytoplasm. The catalysed reaction is 1-(5-phospho-beta-D-ribosyl)-5-[(5-phospho-beta-D-ribosylamino)methylideneamino]imidazole-4-carboxamide = 5-[(5-phospho-1-deoxy-D-ribulos-1-ylimino)methylamino]-1-(5-phospho-beta-D-ribosyl)imidazole-4-carboxamide. It functions in the pathway amino-acid biosynthesis; L-histidine biosynthesis; L-histidine from 5-phospho-alpha-D-ribose 1-diphosphate: step 4/9. In Rhodopseudomonas palustris (strain BisB5), this protein is 1-(5-phosphoribosyl)-5-[(5-phosphoribosylamino)methylideneamino] imidazole-4-carboxamide isomerase.